Consider the following 291-residue polypeptide: Ribonuclease Z (291 aa).

Zn(2+) contacts are provided by H61, H63, D65, H66, H133, D201, and H257. Catalysis depends on D65, which acts as the Proton acceptor.

It belongs to the RNase Z family. In terms of assembly, homodimer. It depends on Zn(2+) as a cofactor.

The catalysed reaction is Endonucleolytic cleavage of RNA, removing extra 3' nucleotides from tRNA precursor, generating 3' termini of tRNAs. A 3'-hydroxy group is left at the tRNA terminus and a 5'-phosphoryl group is left at the trailer molecule.. Its function is as follows. Zinc phosphodiesterase, which displays some tRNA 3'-processing endonuclease activity. Probably involved in tRNA maturation, by removing a 3'-trailer from precursor tRNA. In Saccharolobus islandicus (strain M.16.27) (Sulfolobus islandicus), this protein is Ribonuclease Z.